The sequence spans 367 residues: MELFKYMETYDYEQVLFCQDKESGLKAIIAIHDTTLGPALGGTRMWMYNSEEEALEDALRLARGMTYKNAAAGLNLGGGKTVIIGDPRKDKNEAMFRAFGRFIQGLNGRYITAEDVGTTVADMDIIYQETDYVTGISPEFGSSGNPSPATAYGVYRGMKAAAKEAFGSDSLEGKVVAVQGVGNVAYHLCRHLHEEGAKLIVTDINKEVVARAVEEFGAKAVDPNDIYGVECDIFAPCALGGIINDQTIPQLKAKVIAGSADNQLKEPRHGDIIHEMGIVYAPDYVINAGGVINVADELYGYNRERAMKKIEQIYDNIEKVFAIAKRDNIPTYVAADRMAEERIETMRKARSPFLQNGHHILSRRRAR.

Lys-80 is a catalytic residue. 180–186 (GVGNVAY) is a binding site for NAD(+).

This sequence belongs to the Glu/Leu/Phe/Val dehydrogenases family. As to quaternary structure, homohexamer.

It catalyses the reaction L-leucine + NAD(+) + H2O = 4-methyl-2-oxopentanoate + NH4(+) + NADH + H(+). It participates in amino-acid degradation; L-leucine degradation; 4-methyl-2-oxopentanoate from L-leucine (dehydrogenase route): step 1/1. Functionally, catalyzes the reversible deamination of L-leucine to 4-methyl-2-oxopentanoate. This Geobacillus stearothermophilus (Bacillus stearothermophilus) protein is Leucine dehydrogenase (ldh).